A 276-amino-acid chain; its full sequence is Carboxysome assembly protein CcmO (276 aa).

2 BMC domains span residues 16–100 and 120–204; these read ALGV…AVLP and AIGL…DSLP. Disordered stretches follow at residues 200-219 and 252-276; these read MDSL…LQLP and QSAL…RDDQ.

It belongs to the bacterial microcompartments protein family. As to quaternary structure, homooligomerizes, possibly as a trimer, interacts with CcmK2 in the carboxysome.

It is found in the carboxysome. Required for formation of the carboxysome, a polyhedral inclusion where RuBisCO (ribulose bisphosphate carboxylase, rbcL-rbcS) is sequestered. Required for recruitment of major shell protein CcmK2 to the pre-carboxysome. Suggested to be a carboxysome shell protein, but it is not detected in gels, mass spectrometry or by protein sequencing. Its function is as follows. Beta-carboxysome assembly initiates when soluble RuBisCO is condensed into a liquid matrix in a pre-carboxysome by the RbcS-like domains of probably both CcmM58 and CcmM35. CcmN interacts with the N-terminus of CcmM58, and then recruits the CcmK2 major shell protein via CcmN's encapsulation peptide. Shell formation requires CcmK proteins and CcmO. CcmL caps the otherwise elongated carboxysome. Once fully encapsulated carboxysomes are formed, they migrate within the cell probably via interactions with the cytoskeleton. This chain is Carboxysome assembly protein CcmO, found in Synechococcus elongatus (strain ATCC 33912 / PCC 7942 / FACHB-805) (Anacystis nidulans R2).